A 211-amino-acid polypeptide reads, in one-letter code: Endonuclease III (211 aa).

Residues 108 to 127 (RAALEALPGVGRKTANVVLN) enclose the HhH domain. [4Fe-4S] cluster contacts are provided by Cys187, Cys194, Cys197, and Cys203.

Belongs to the Nth/MutY family. [4Fe-4S] cluster serves as cofactor.

The catalysed reaction is 2'-deoxyribonucleotide-(2'-deoxyribose 5'-phosphate)-2'-deoxyribonucleotide-DNA = a 3'-end 2'-deoxyribonucleotide-(2,3-dehydro-2,3-deoxyribose 5'-phosphate)-DNA + a 5'-end 5'-phospho-2'-deoxyribonucleoside-DNA + H(+). Functionally, DNA repair enzyme that has both DNA N-glycosylase activity and AP-lyase activity. The DNA N-glycosylase activity releases various damaged pyrimidines from DNA by cleaving the N-glycosidic bond, leaving an AP (apurinic/apyrimidinic) site. The AP-lyase activity cleaves the phosphodiester bond 3' to the AP site by a beta-elimination, leaving a 3'-terminal unsaturated sugar and a product with a terminal 5'-phosphate. The chain is Endonuclease III from Escherichia coli O6:H1 (strain CFT073 / ATCC 700928 / UPEC).